A 516-amino-acid polypeptide reads, in one-letter code: Golgi-associated kinase 1B (516 aa).

Over Met-1–Asn-37 the chain is Cytoplasmic. The helical; Signal-anchor for type II membrane protein transmembrane segment at Leu-38–Val-55 threads the bilayer. The Extracellular segment spans residues Gly-56 to Glu-516. Asn-286 carries N-linked (GlcNAc...) asparagine glycosylation.

Belongs to the GASK family.

Its subcellular location is the golgi apparatus membrane. This is Golgi-associated kinase 1B from Rattus norvegicus (Rat).